The following is a 180-amino-acid chain: NAD(P)H-quinone oxidoreductase subunit I, chloroplastic (180 aa).

4Fe-4S ferredoxin-type domains are found at residues 55–84 (GRIH…VDWR) and 95–124 (LNYS…MTEE). 8 residues coordinate [4Fe-4S] cluster: C64, C67, C70, C74, C104, C107, C110, and C114.

This sequence belongs to the complex I 23 kDa subunit family. As to quaternary structure, NDH is composed of at least 16 different subunits, 5 of which are encoded in the nucleus. [4Fe-4S] cluster is required as a cofactor.

The protein resides in the plastid. The protein localises to the chloroplast thylakoid membrane. The enzyme catalyses a plastoquinone + NADH + (n+1) H(+)(in) = a plastoquinol + NAD(+) + n H(+)(out). It carries out the reaction a plastoquinone + NADPH + (n+1) H(+)(in) = a plastoquinol + NADP(+) + n H(+)(out). Its function is as follows. NDH shuttles electrons from NAD(P)H:plastoquinone, via FMN and iron-sulfur (Fe-S) centers, to quinones in the photosynthetic chain and possibly in a chloroplast respiratory chain. The immediate electron acceptor for the enzyme in this species is believed to be plastoquinone. Couples the redox reaction to proton translocation, and thus conserves the redox energy in a proton gradient. In Liriodendron tulipifera (Tuliptree), this protein is NAD(P)H-quinone oxidoreductase subunit I, chloroplastic.